The chain runs to 143 residues: Large ribosomal subunit protein uL15 (143 aa).

Residues 1–51 (MRLNSIAPAPGSRPSAKRVGRGIGSGLGKTAGRGHKGQKARAGGYHKVGFE) form a disordered region. The segment covering 21-31 (RGIGSGLGKTA) has biased composition (gly residues).

This sequence belongs to the universal ribosomal protein uL15 family. Part of the 50S ribosomal subunit.

Its function is as follows. Binds to the 23S rRNA. The chain is Large ribosomal subunit protein uL15 from Thioalkalivibrio sulfidiphilus (strain HL-EbGR7).